The following is a 151-amino-acid chain: NPC intracellular cholesterol transporter 2 (151 aa).

A signal peptide spans 1–19 (MRFLAATFLLLALSTAAQA). 3 cysteine pairs are disulfide-bonded: Cys27/Cys140, Cys42/Cys47, and Cys93/Cys99. Asn58 carries N-linked (GlcNAc...) asparagine glycosylation. An N6-acetyllysine modification is found at Lys116. Asn135 is a glycosylation site (N-linked (GlcNAc...) asparagine).

The protein belongs to the NPC2 family. In terms of assembly, interacts with NPC1 (via the second lumenal domain) in a cholestrol-dependent manner. Interacts with NUS1/NgBR, the interaction stabilizes NCP2 and regulates cholesterol trafficking. Interacts with DHDDS. Interacts with NEDD4L (via C2 domain). Interacts with NPC1L1. Detected in gallbladder bile. Detected in fibroblasts, kidney, liver, spleen, small intestine, placenta and testis (at protein level). Epididymis.

The protein resides in the secreted. The protein localises to the endoplasmic reticulum. Its subcellular location is the lysosome. It carries out the reaction cholesterol(in) = cholesterol(out). Its function is as follows. Intracellular cholesterol transporter which acts in concert with NPC1 and plays an important role in the egress of cholesterol from the lysosomal compartment. Unesterified cholesterol that has been released from LDLs in the lumen of the late endosomes/lysosomes is transferred by NPC2 to the cholesterol-binding pocket in the N-terminal domain of NPC1. May bind and mobilize cholesterol that is associated with membranes. NPC2 binds cholesterol with a 1:1 stoichiometry. Can bind a variety of sterols, including lathosterol, desmosterol and the plant sterols stigmasterol and beta-sitosterol. The secreted form of NCP2 regulates biliary cholesterol secretion via stimulation of ABCG5/ABCG8-mediated cholesterol transport. The protein is NPC intracellular cholesterol transporter 2 of Homo sapiens (Human).